The chain runs to 272 residues: MKTVSLLIDMKQKQTKISMVTAYDFPSAKQVEAAGIDMILVGDSLGMTVLGYESTVQVTLADMIHHGRAVRRGAPNTFVVVDMPIGAVGISMTQDLNHALKLYQETNANAIKAEGAHITPFIEKATAIGIPVVAHLGLTPQSVGVMGYKLQGATKEAAEQLILDAKNVEQAGAVALVLEAIPNDLAEEISKHLTIPVIGIGAGKGTDGQVLVYHDMLNYGVEHKAKFVKQFADFSVGVDGLKQYDQEVKSGAFPSEEYTYKKKIMNEVNNND.

Mg(2+) is bound by residues Asp43 and Asp82. Residues 43–44 (DS), Asp82, and Lys112 contribute to the 3-methyl-2-oxobutanoate site. Glu114 contributes to the Mg(2+) binding site. The active-site Proton acceptor is the Glu179.

This sequence belongs to the PanB family. As to quaternary structure, homodecamer; pentamer of dimers. The cofactor is Mg(2+).

The protein resides in the cytoplasm. It carries out the reaction 3-methyl-2-oxobutanoate + (6R)-5,10-methylene-5,6,7,8-tetrahydrofolate + H2O = 2-dehydropantoate + (6S)-5,6,7,8-tetrahydrofolate. The protein operates within cofactor biosynthesis; (R)-pantothenate biosynthesis; (R)-pantoate from 3-methyl-2-oxobutanoate: step 1/2. Catalyzes the reversible reaction in which hydroxymethyl group from 5,10-methylenetetrahydrofolate is transferred onto alpha-ketoisovalerate to form ketopantoate. The polypeptide is 3-methyl-2-oxobutanoate hydroxymethyltransferase (Staphylococcus aureus (strain Mu3 / ATCC 700698)).